Consider the following 147-residue polypeptide: Ribosome maturation factor RimP (147 aa).

This sequence belongs to the RimP family.

It localises to the cytoplasm. Its function is as follows. Required for maturation of 30S ribosomal subunits. The chain is Ribosome maturation factor RimP from Sulfurihydrogenibium sp. (strain YO3AOP1).